A 355-amino-acid chain; its full sequence is Chorismate synthase (355 aa).

NADP(+)-binding residues include arginine 44 and arginine 49. Residues 121–123 (HFS), glycine 277, 292–296 (KPTPS), and arginine 319 each bind FMN.

It belongs to the chorismate synthase family. FMNH2 is required as a cofactor.

The catalysed reaction is 5-O-(1-carboxyvinyl)-3-phosphoshikimate = chorismate + phosphate. Its pathway is metabolic intermediate biosynthesis; chorismate biosynthesis; chorismate from D-erythrose 4-phosphate and phosphoenolpyruvate: step 7/7. Functionally, catalyzes the anti-1,4-elimination of the C-3 phosphate and the C-6 proR hydrogen from 5-enolpyruvylshikimate-3-phosphate (EPSP) to yield chorismate, which is the branch point compound that serves as the starting substrate for the three terminal pathways of aromatic amino acid biosynthesis. This reaction introduces a second double bond into the aromatic ring system. This Thermococcus kodakarensis (strain ATCC BAA-918 / JCM 12380 / KOD1) (Pyrococcus kodakaraensis (strain KOD1)) protein is Chorismate synthase.